Reading from the N-terminus, the 157-residue chain is uncharacterized protein (157 aa).

The region spanning 9-146 (LLINYKTLDE…GDFYVWHPET (138 aa)) is the N-acetyltransferase domain.

This is an uncharacterized protein from Bacillus cereus (strain ZK / E33L).